We begin with the raw amino-acid sequence, 313 residues long: Homoserine O-succinyltransferase (313 aa).

The Acyl-thioester intermediate role is filled by cysteine 142. Positions 163 and 192 each coordinate substrate. The Proton acceptor role is filled by histidine 235. Glutamate 237 is an active-site residue. Substrate is bound at residue arginine 249.

Belongs to the MetA family.

Its subcellular location is the cytoplasm. It carries out the reaction L-homoserine + succinyl-CoA = O-succinyl-L-homoserine + CoA. The protein operates within amino-acid biosynthesis; L-methionine biosynthesis via de novo pathway; O-succinyl-L-homoserine from L-homoserine: step 1/1. Functionally, transfers a succinyl group from succinyl-CoA to L-homoserine, forming succinyl-L-homoserine. This Vibrio parahaemolyticus serotype O3:K6 (strain RIMD 2210633) protein is Homoserine O-succinyltransferase.